Here is a 202-residue protein sequence, read N- to C-terminus: Protein U22 (202 aa).

The next 2 membrane-spanning stretches (helical) occupy residues 5–25 and 172–192; these read GWSL…LHII and FVYY…SCWF.

The protein localises to the host membrane. The polypeptide is Protein U22 (U22) (Human herpesvirus 6B (strain Z29) (HHV-6 variant B)).